Consider the following 182-residue polypeptide: Large ribosomal subunit protein uL5 (182 aa).

This sequence belongs to the universal ribosomal protein uL5 family. Part of the 50S ribosomal subunit; part of the 5S rRNA/L5/L18/L25 subcomplex. Contacts the 5S rRNA and the P site tRNA. Forms a bridge to the 30S subunit in the 70S ribosome.

Its function is as follows. This is one of the proteins that bind and probably mediate the attachment of the 5S RNA into the large ribosomal subunit, where it forms part of the central protuberance. In the 70S ribosome it contacts protein S13 of the 30S subunit (bridge B1b), connecting the 2 subunits; this bridge is implicated in subunit movement. Contacts the P site tRNA; the 5S rRNA and some of its associated proteins might help stabilize positioning of ribosome-bound tRNAs. This is Large ribosomal subunit protein uL5 from Borrelia duttonii (strain Ly).